We begin with the raw amino-acid sequence, 107 residues long: UPF0145 protein ESA_02470 (107 aa).

This sequence belongs to the UPF0145 family.

The chain is UPF0145 protein ESA_02470 from Cronobacter sakazakii (strain ATCC BAA-894) (Enterobacter sakazakii).